The primary structure comprises 87 residues: Cell division protein ZapA (87 aa).

The stretch at 64-87 (VHDYIKLKEEYDRLLQKLHKEKDE) forms a coiled coil.

Belongs to the ZapA family. Type 2 subfamily. As to quaternary structure, homodimer. Interacts with FtsZ.

The protein resides in the cytoplasm. Activator of cell division through the inhibition of FtsZ GTPase activity, therefore promoting FtsZ assembly into bundles of protofilaments necessary for the formation of the division Z ring. It is recruited early at mid-cell but it is not essential for cell division. The chain is Cell division protein ZapA from Geobacillus sp. (strain WCH70).